Consider the following 129-residue polypeptide: Small ribosomal subunit protein uS11 (129 aa).

It belongs to the universal ribosomal protein uS11 family. As to quaternary structure, part of the 30S ribosomal subunit. Interacts with proteins S7 and S18. Binds to IF-3.

Located on the platform of the 30S subunit, it bridges several disparate RNA helices of the 16S rRNA. Forms part of the Shine-Dalgarno cleft in the 70S ribosome. The chain is Small ribosomal subunit protein uS11 from Geobacillus stearothermophilus (Bacillus stearothermophilus).